The following is a 572-amino-acid chain: Phosphoenolpyruvate-protein phosphotransferase (572 aa).

His190 (tele-phosphohistidine intermediate) is an active-site residue. 2 residues coordinate phosphoenolpyruvate: Arg297 and Arg333. Mg(2+) contacts are provided by Glu427 and Asp451. Residues Asn450–Asp451 and Arg461 each bind phosphoenolpyruvate. The active-site Proton donor is the Cys498.

The protein belongs to the PEP-utilizing enzyme family. In terms of assembly, homodimer. Mg(2+) serves as cofactor.

It is found in the cytoplasm. It catalyses the reaction L-histidyl-[protein] + phosphoenolpyruvate = N(pros)-phospho-L-histidyl-[protein] + pyruvate. General (non sugar-specific) component of the phosphoenolpyruvate-dependent sugar phosphotransferase system (sugar PTS). This major carbohydrate active-transport system catalyzes the phosphorylation of incoming sugar substrates concomitantly with their translocation across the cell membrane. Enzyme I transfers the phosphoryl group from phosphoenolpyruvate (PEP) to the phosphoryl carrier protein (HPr). The sequence is that of Phosphoenolpyruvate-protein phosphotransferase (ptsI) from Mycoplasma pneumoniae (strain ATCC 29342 / M129 / Subtype 1) (Mycoplasmoides pneumoniae).